The primary structure comprises 149 residues: 3-dehydroquinate dehydratase (149 aa).

Catalysis depends on Tyr-21, which acts as the Proton acceptor. Residues Asn-73, His-79, and Asp-86 each coordinate substrate. His-99 (proton donor) is an active-site residue. Substrate is bound by residues 100 to 101 (LT) and Arg-110.

It belongs to the type-II 3-dehydroquinase family. In terms of assembly, homododecamer.

It carries out the reaction 3-dehydroquinate = 3-dehydroshikimate + H2O. The protein operates within metabolic intermediate biosynthesis; chorismate biosynthesis; chorismate from D-erythrose 4-phosphate and phosphoenolpyruvate: step 3/7. Functionally, catalyzes a trans-dehydration via an enolate intermediate. This is 3-dehydroquinate dehydratase from Thermus thermophilus (strain ATCC BAA-163 / DSM 7039 / HB27).